The chain runs to 200 residues: Putative 3-methyladenine DNA glycosylase (200 aa).

The protein belongs to the DNA glycosylase MPG family.

This chain is Putative 3-methyladenine DNA glycosylase, found in Bradyrhizobium diazoefficiens (strain JCM 10833 / BCRC 13528 / IAM 13628 / NBRC 14792 / USDA 110).